The sequence spans 513 residues: Sterol 14-alpha demethylase (513 aa).

Residues 8–28 traverse the membrane as a helical segment; the sequence is AYALLAFVAIMALNVTYQFLF. Asparagine 32 and asparagine 332 each carry an N-linked (GlcNAc...) asparagine glycan. A heme-binding site is contributed by cysteine 453.

It belongs to the cytochrome P450 family. Heme serves as cofactor.

It is found in the endoplasmic reticulum membrane. It carries out the reaction a 14alpha-methyl steroid + 3 reduced [NADPH--hemoprotein reductase] + 3 O2 = a Delta(14) steroid + formate + 3 oxidized [NADPH--hemoprotein reductase] + 4 H2O + 4 H(+). The catalysed reaction is a 14alpha-methyl steroid + reduced [NADPH--hemoprotein reductase] + O2 = a 14alpha-hydroxymethyl steroid + oxidized [NADPH--hemoprotein reductase] + H2O + H(+). The enzyme catalyses a 14alpha-hydroxymethyl steroid + reduced [NADPH--hemoprotein reductase] + O2 = a 14alpha-formyl steroid + oxidized [NADPH--hemoprotein reductase] + 2 H2O + H(+). It catalyses the reaction a 14alpha-formyl steroid + reduced [NADPH--hemoprotein reductase] + O2 = a Delta(14) steroid + formate + oxidized [NADPH--hemoprotein reductase] + H2O + 2 H(+). It carries out the reaction lanosterol + 3 reduced [NADPH--hemoprotein reductase] + 3 O2 = 4,4-dimethyl-5alpha-cholesta-8,14,24-trien-3beta-ol + formate + 3 oxidized [NADPH--hemoprotein reductase] + 4 H2O + 4 H(+). The catalysed reaction is lanosterol + reduced [NADPH--hemoprotein reductase] + O2 = 32-hydroxylanosterol + oxidized [NADPH--hemoprotein reductase] + H2O + H(+). The enzyme catalyses 32-hydroxylanosterol + reduced [NADPH--hemoprotein reductase] + O2 = 32-oxolanosterol + oxidized [NADPH--hemoprotein reductase] + 2 H2O + H(+). It catalyses the reaction 32-oxolanosterol + reduced [NADPH--hemoprotein reductase] + O2 = 4,4-dimethyl-5alpha-cholesta-8,14,24-trien-3beta-ol + formate + oxidized [NADPH--hemoprotein reductase] + H2O + 2 H(+). It carries out the reaction eburicol + 3 reduced [NADPH--hemoprotein reductase] + 3 O2 = 14-demethyleburicol + formate + 3 oxidized [NADPH--hemoprotein reductase] + 4 H2O + 4 H(+). The catalysed reaction is eburicol + reduced [NADPH--hemoprotein reductase] + O2 = 32-hydroxyeburicol + oxidized [NADPH--hemoprotein reductase] + H2O + H(+). The enzyme catalyses 32-hydroxyeburicol + reduced [NADPH--hemoprotein reductase] + O2 = 32-oxoeburicol + oxidized [NADPH--hemoprotein reductase] + 2 H2O + H(+). It catalyses the reaction 32-oxoeburicol + reduced [NADPH--hemoprotein reductase] + O2 = 14-demethyleburicol + formate + oxidized [NADPH--hemoprotein reductase] + H2O + 2 H(+). The protein operates within steroid biosynthesis; sterol biosynthesis. In terms of biological role, sterol 14alpha-demethylase, encoded by cyp51A, cyp51B and cyp51C, that plays a critical role in the third module of ergosterol biosynthesis pathway, being ergosterol the major sterol component in fungal membranes that participates in a variety of functions. The third module or late pathway involves the ergosterol synthesis itself through consecutive reactions that mainly occur in the endoplasmic reticulum (ER) membrane. In filamentous fungi, during the initial step of this module, lanosterol (lanosta-8,24-dien-3beta-ol) can be metabolized to eburicol. Sterol 14alpha-demethylase catalyzes the three-step oxidative removal of the 14alpha-methyl group (C-32) of both these sterols in the form of formate, and converts eburicol and lanosterol to 14-demethyleburicol (4,4,24-trimethylergosta-8,14,24(28)-trienol) and 4,4-dimethyl-5alpha-cholesta-8,14,24-trien-3beta-ol, respectively, which are further metabolized by other enzymes in the pathway to ergosterol. Can also use substrates not intrinsic to fungi, such as 24,25-dihydrolanosterol (DHL), producing 4,4'-dimethyl-8,14-cholestadien-3-beta-ol, but at lower rates than the endogenous substrates. Functionally, as a target of azole drugs, plays a crucial role in azole drug susceptibility. This chain is Sterol 14-alpha demethylase, found in Aspergillus flavus (strain ATCC 200026 / FGSC A1120 / IAM 13836 / NRRL 3357 / JCM 12722 / SRRC 167).